Here is a 175-residue protein sequence, read N- to C-terminus: Transcription factor E (175 aa).

Residues 3 to 88 (ENPLIQQVLF…TWKPSLEKVP (86 aa)) form the HTH TFE/IIEalpha-type domain.

This sequence belongs to the TFE family. As to quaternary structure, monomer. Interaction with RNA polymerase subunits RpoF and RpoE is necessary for Tfe stimulatory transcription activity. Able to interact with Tbp and RNA polymerase in the absence of DNA promoter. Interacts both with the preinitiation and elongation complexes.

Its function is as follows. Transcription factor that plays a role in the activation of archaeal genes transcribed by RNA polymerase. Facilitates transcription initiation by enhancing TATA-box recognition by TATA-box-binding protein (Tbp), and transcription factor B (Tfb) and RNA polymerase recruitment. Not absolutely required for transcription in vitro, but particularly important in cases where Tbp or Tfb function is not optimal. It dynamically alters the nucleic acid-binding properties of RNA polymerases by stabilizing the initiation complex and destabilizing elongation complexes. Seems to translocate with the RNA polymerase following initiation and acts by binding to the non template strand of the transcription bubble in elongation complexes. This Methanococcus maripaludis (strain DSM 14266 / JCM 13030 / NBRC 101832 / S2 / LL) protein is Transcription factor E.